A 359-amino-acid polypeptide reads, in one-letter code: MHPRPSPIAASLYTLRDLDADVIILHGPHGCCFRTGRLLETDGVRVLTTAMSEQDFIFGASDKLTETLRKAYEMFSPKLVGVVGTCASMIIGEDLKEAVQRAGIPARVLAVESHGGFGEGDNTEGAIIVLEAAAEQGIIPEEEAERQIKMLKLATEIEKTRGMAQGKYIRPSYGDDKDEVALRVLEAIMEGRRVAFVLNAKKETSYLFADTLTLPFGSLNPDNPPIIIANLDKGIGLPRIRRHAENILSEIERSGNRVEHITGGLDEYPITGARAAEILRNEEIEFAVVSGVPHALPVEELGLESVAVTDGPRLVEPLRGLGYTHVVAELDAHARTLGQRSIVESDFGDALRRNIKKVI.

It belongs to the NifD/NifK/NifE/NifN family. As to quaternary structure, homodimer or monomer. The Ni-sirohydrochlorin a,c-diamide reductive cyclase complex is composed of a NifH homolog component CfbC and a NifD homolog component CfbD. It depends on [4Fe-4S] cluster as a cofactor.

It carries out the reaction Ni-sirohydrochlorin a,c-diamide + 3 AH2 + ATP + H2O = 15,17(3)-seco-F430-17(3)-acid + 3 A + ADP + phosphate. Involved in the biosynthesis of the unique nickel-containing tetrapyrrole coenzyme F430, the prosthetic group of methyl-coenzyme M reductase (MCR), which plays a key role in methanogenesis and anaerobic methane oxidation. Catalyzes both the six-electron reduction of the tetrahydroporphyrin ring system and the gamma-lactamization of the c-acetamide side chain of Ni-sirohydrochlorin a,c-diamide to yield 15,17(3)-seco-F430-17(3)-acid (seco-F430), the last intermediate in the biosynthesis of the coenzyme F430. The chain is Ni-sirohydrochlorin a,c-diamide reductive cyclase complex, component CfbD from Methanothermobacter thermautotrophicus (strain ATCC 29096 / DSM 1053 / JCM 10044 / NBRC 100330 / Delta H) (Methanobacterium thermoautotrophicum).